The primary structure comprises 81 residues: MRASMFLALAGLVLLFVVCYASESEEKEFPRELLFKFFAVDDFKGEERACKGVFDACTPGKNECCPNRVCSDKHKWCKWKL.

An N-terminal signal peptide occupies residues 1–21 (MRASMFLALAGLVLLFVVCYA). Positions 22–48 (SESEEKEFPRELLFKFFAVDDFKGEER) are excised as a propeptide. Cystine bridges form between Cys50-Cys65, Cys57-Cys70, and Cys64-Cys77.

It belongs to the neurotoxin 10 (Hwtx-1) family. 23 (HwTx-I) subfamily. In terms of tissue distribution, expressed by the venom gland.

The protein localises to the secreted. Functionally, lethal toxin with multiple biological activities. Inhibits voltage-gated TTX-sensitive sodium channels in DRG neurons (IC(50)=55 nM) and also shows activity when directly tested on Nav1.7/SCN9A (IC(50)=25.1-630 nM). Inhibits N-type calcium channels (Cav2.2/CACNA1B (IC(50)=100 nM)). Also blocks neuromuscular transmission. In vivo, intrathecal injected toxin shows analgesic activity in the rat formalin-induced pain model, without induction of motor dysfunction in rats. This Cyriopagopus schmidti (Chinese bird spider) protein is Mu/omega-theraphotoxin-Hs1a.